The chain runs to 487 residues: MDPVVVLVLGLCCLLLLSHWKQNSGRGKLPPGPTPFPIIGNILQIDAKDISKSLTKFSERYGPVFTVYLGMKPAVVLHGYQAVKEALVDLGEEFAGRGSFPMLDKVSKGLGIVFTNGKRWKEIRRFSLMTLRNFGMGKRSIEDRVQEEARCLVEELRKTNASPCDPTFILGCAPCNVICSIIFHNRFDYKDEEFLKLLEKFNENVRILSSPWLQVCNNFPALIDYLPGSHKTLLKNSDYVKNFIMEKVKEHQKFLDVNNPRDFIDCFLIKMEQENHLEFTLESLVTTVFDLFGAGTETTSTTLRYSLLLLLKHPEVADKVQEEIERVIGRHRSPCMQDRSRMPYTDAVIHEIQRFIDLVPNNLPHTVTRDIKFRNYFIPKGTDIMTSLTSVLHDEKAFPNPKVFDPGHFLDESGNFKKSDYFMPFSAGKRICVGEALARMELFLFLTSILQNFKLQSLVEPKDLDITAVLNGFVSVPPSFQLCFIPV.

Residue Cys-432 coordinates heme.

It belongs to the cytochrome P450 family. The cofactor is heme. As to expression, expressed constitutively in liver, lung, testes, and kidney.

It localises to the endoplasmic reticulum membrane. Its subcellular location is the microsome membrane. The enzyme catalyses an organic molecule + reduced [NADPH--hemoprotein reductase] + O2 = an alcohol + oxidized [NADPH--hemoprotein reductase] + H2O + H(+). In terms of biological role, cytochromes P450 are a group of heme-thiolate monooxygenases. In liver microsomes, this enzyme is involved in an NADPH-dependent electron transport pathway. It oxidizes a variety of structurally unrelated compounds, including steroids, fatty acids, and xenobiotics. This is Cytochrome P450 2C16 (CYP2C16) from Oryctolagus cuniculus (Rabbit).